The following is a 404-amino-acid chain: Probable homogentisate phytyltransferase 1, chloroplastic (404 aa).

The transit peptide at 1–77 (MDSLRLRPSL…SHHRIPHRPT (77 aa)) directs the protein to the chloroplast. The tract at residues 68–96 (SHHRIPHRPTSSSADASGQPLQSSAEAHD) is disordered. Residues 76-92 (PTSSSADASGQPLQSSA) show a composition bias toward polar residues. Helical transmembrane passes span 119-139 (TVIGTALSIVSVSLLAVENLS), 144-164 (LFLTGLLEAVVAALFMNIYIV), 184-204 (LASGEYSPATGVALVSAFAAM), 216-238 (PLFLALFISFILGTAYSINLPFL), 245-265 (VVAALCILAVRAVIVQLAFFL), 282-302 (LIFATAFMTFFSVVIALFKDI), 325-345 (VFWICVGLLEMAYCVAILMGA), 348-368 (ACLWSKYATVVGHAILAAILW), and 382-402 (ITSFYMFIWKLFYAEYLLIPL).

It belongs to the UbiA prenyltransferase family.

The protein resides in the plastid. It localises to the chloroplast thylakoid membrane. It carries out the reaction phytyl diphosphate + homogentisate + H(+) = 2-methyl-6-phytyl-1,4-benzene-1,4-diol + CO2 + diphosphate. It functions in the pathway cofactor biosynthesis; tocopherol biosynthesis. Its function is as follows. Involved in the synthesis of tocopherol (vitamin E). Catalyzes the condensation of homogentisate and phytyl diphosphate to form dimethylphytylhydroquinone. The protein is Probable homogentisate phytyltransferase 1, chloroplastic (HPT1) of Oryza sativa subsp. japonica (Rice).